Consider the following 185-residue polypeptide: Transmembrane protein 252 (185 aa).

2 helical membrane passes run Val-8–Ile-28 and Leu-39–Trp-59. The tract at residues Tyr-125–Pro-149 is disordered.

The protein localises to the membrane. This is Transmembrane protein 252 (Tmem252) from Rattus norvegicus (Rat).